We begin with the raw amino-acid sequence, 530 residues long: Probable NADH-specific resorcinol 4-hydroxylase (530 aa).

It catalyses the reaction resorcinol + NADH + O2 + H(+) = benzene-1,2,4-triol + NAD(+) + H2O. Its function is as follows. Single-component hydroxylase that is part of the gamma-resorcylate (GRA) degradation pathway. GRA is initially converted by GRA decarboxylase to resorcinol, which is hydroxylated by resorcinol 4-hydroxylase. In Rhodococcus jostii (strain RHA1), this protein is Probable NADH-specific resorcinol 4-hydroxylase (tsdB).